The chain runs to 165 residues: Lipoprotein signal peptidase (165 aa).

A run of 4 helical transmembrane segments spans residues 7–27, 28–48, 61–81, and 87–107; these read FFLL…KYWI, THTM…LYHV, FSHW…FWLW, and DKAL…GNLI. Active-site residues include D117 and D136. Residues 128–148 form a helical membrane-spanning segment; that stretch reads SFAIFNLADTFITLGAISILI.

Belongs to the peptidase A8 family.

It localises to the cell inner membrane. The enzyme catalyses Release of signal peptides from bacterial membrane prolipoproteins. Hydrolyzes -Xaa-Yaa-Zaa-|-(S,diacylglyceryl)Cys-, in which Xaa is hydrophobic (preferably Leu), and Yaa (Ala or Ser) and Zaa (Gly or Ala) have small, neutral side chains.. It functions in the pathway protein modification; lipoprotein biosynthesis (signal peptide cleavage). This protein specifically catalyzes the removal of signal peptides from prolipoproteins. In Bartonella bacilliformis (strain ATCC 35685 / KC583 / Herrer 020/F12,63), this protein is Lipoprotein signal peptidase.